Here is a 920-residue protein sequence, read N- to C-terminus: Isoleucine--tRNA ligase (920 aa).

A 'HIGH' region motif is present at residues 57 to 67 (PYANGDIHLGH). Glutamate 560 lines the L-isoleucyl-5'-AMP pocket. Residues 601–605 (KMSKS) carry the 'KMSKS' region motif. Lysine 604 is a binding site for ATP. Positions 890, 893, 910, and 913 each coordinate Zn(2+).

Belongs to the class-I aminoacyl-tRNA synthetase family. IleS type 1 subfamily. In terms of assembly, monomer. The cofactor is Zn(2+).

The protein localises to the cytoplasm. It catalyses the reaction tRNA(Ile) + L-isoleucine + ATP = L-isoleucyl-tRNA(Ile) + AMP + diphosphate. In terms of biological role, catalyzes the attachment of isoleucine to tRNA(Ile). As IleRS can inadvertently accommodate and process structurally similar amino acids such as valine, to avoid such errors it has two additional distinct tRNA(Ile)-dependent editing activities. One activity is designated as 'pretransfer' editing and involves the hydrolysis of activated Val-AMP. The other activity is designated 'posttransfer' editing and involves deacylation of mischarged Val-tRNA(Ile). This chain is Isoleucine--tRNA ligase, found in Caldicellulosiruptor saccharolyticus (strain ATCC 43494 / DSM 8903 / Tp8T 6331).